We begin with the raw amino-acid sequence, 175 residues long: MSQALTLARPYARAAFATARDEGAFAPWSDALAFSAHVAADPRVAALLANPELGRDDAVALLAPVTHGETYSRFLAILAESHRLPLLPEISGMFDALRADAEHVVKANVTSAAELSAGELDAIKTALRKRFNREVEVTTAVDASLIGGAVIDAGDVVIDGSLKGKLARLQTALAN.

It belongs to the ATPase delta chain family. In terms of assembly, F-type ATPases have 2 components, F(1) - the catalytic core - and F(0) - the membrane proton channel. F(1) has five subunits: alpha(3), beta(3), gamma(1), delta(1), epsilon(1). F(0) has three main subunits: a(1), b(2) and c(10-14). The alpha and beta chains form an alternating ring which encloses part of the gamma chain. F(1) is attached to F(0) by a central stalk formed by the gamma and epsilon chains, while a peripheral stalk is formed by the delta and b chains.

The protein resides in the cell inner membrane. In terms of biological role, f(1)F(0) ATP synthase produces ATP from ADP in the presence of a proton or sodium gradient. F-type ATPases consist of two structural domains, F(1) containing the extramembraneous catalytic core and F(0) containing the membrane proton channel, linked together by a central stalk and a peripheral stalk. During catalysis, ATP synthesis in the catalytic domain of F(1) is coupled via a rotary mechanism of the central stalk subunits to proton translocation. Its function is as follows. This protein is part of the stalk that links CF(0) to CF(1). It either transmits conformational changes from CF(0) to CF(1) or is implicated in proton conduction. The chain is ATP synthase subunit delta from Stenotrophomonas maltophilia (strain R551-3).